The sequence spans 357 residues: Protein RecA (357 aa).

71–78 (GPESSGKT) is an ATP binding site.

This sequence belongs to the RecA family.

The protein localises to the cytoplasm. Its function is as follows. Can catalyze the hydrolysis of ATP in the presence of single-stranded DNA, the ATP-dependent uptake of single-stranded DNA by duplex DNA, and the ATP-dependent hybridization of homologous single-stranded DNAs. It interacts with LexA causing its activation and leading to its autocatalytic cleavage. The chain is Protein RecA from Ehrlichia chaffeensis (strain ATCC CRL-10679 / Arkansas).